Here is a 425-residue protein sequence, read N- to C-terminus: Enolase (425 aa).

Position 163 (Gln163) interacts with (2R)-2-phosphoglycerate. Glu205 (proton donor) is an active-site residue. Mg(2+) is bound by residues Asp242, Glu285, and Asp312. Positions 337, 366, 367, and 388 each coordinate (2R)-2-phosphoglycerate. The active-site Proton acceptor is the Lys337.

It belongs to the enolase family. The cofactor is Mg(2+).

It is found in the cytoplasm. Its subcellular location is the secreted. The protein localises to the cell surface. It carries out the reaction (2R)-2-phosphoglycerate = phosphoenolpyruvate + H2O. Its pathway is carbohydrate degradation; glycolysis; pyruvate from D-glyceraldehyde 3-phosphate: step 4/5. Catalyzes the reversible conversion of 2-phosphoglycerate (2-PG) into phosphoenolpyruvate (PEP). It is essential for the degradation of carbohydrates via glycolysis. The protein is Enolase of Rhodospirillum rubrum (strain ATCC 11170 / ATH 1.1.1 / DSM 467 / LMG 4362 / NCIMB 8255 / S1).